Reading from the N-terminus, the 470-residue chain is Angiopoietin-related protein 6 (470 aa).

An N-terminal signal peptide occupies residues 1–20 (MGKPWLRALQLLLLLGASWA). N58 carries an N-linked (GlcNAc...) asparagine glycan. Residues 59 to 116 (ASELAALRMRVGRHEELLRELQRLAAADGAVAGEVRALRKESRGLSARLGQLRAQLQH) adopt a coiled-coil conformation. N-linked (GlcNAc...) (complex) asparagine glycosylation occurs at N145. A disordered region spans residues 214–249 (SDTSRMLDPAPEPQRDQTQRQQEPMASPMPAGHPAV). Residues 251-469 (TKPVGPWQDC…KAAMLIRPLK (219 aa)) enclose the Fibrinogen C-terminal domain. Intrachain disulfides connect C260-C287 and C410-C423.

It is found in the secreted. Functionally, may play a role in the wound healing process. May promote epidermal proliferation, remodeling and regeneration. May promote the chemotactic activity of endothelial cells and induce neovascularization. May counteract high-fat diet-induced obesity and related insulin resistance through increased energy expenditure. The chain is Angiopoietin-related protein 6 (ANGPTL6) from Homo sapiens (Human).